Reading from the N-terminus, the 349-residue chain is Pseudouridylate synthase TRUB1 (349 aa).

Ala-2 carries the post-translational modification N-acetylalanine. Ser-11 is modified (phosphoserine). Asp-121 (nucleophile) is an active-site residue.

The protein belongs to the pseudouridine synthase TruB family. In terms of tissue distribution, highly expressed in heart, skeletal muscle and liver. Expressed at lower levels in lung, small intestine, kidney and spleen.

Its subcellular location is the nucleus. The protein resides in the cytoplasm. It is found in the cytosol. It catalyses the reaction a uridine in mRNA = a pseudouridine in mRNA. It carries out the reaction a uridine in tRNA = a pseudouridine in tRNA. The enzyme catalyses uridine(55) in tRNA = pseudouridine(55) in tRNA. In terms of biological role, pseudouridine synthase that catalyzes pseudouridylation of mRNAs and tRNAs. Mediates pseudouridylation of mRNAs with the consensus sequence 5'-GUUCNANNC-3', harboring a stem-loop structure. Constitutes the major pseudouridine synthase acting on mRNAs. Also catalyzes pseudouridylation of some tRNAs, including synthesis of pseudouridine(55) from uracil-55, in the psi GC loop of a subset of tRNAs. Promotes the processing of pri-let-7 microRNAs (pri-miRNAs) independently of its RNA pseudouridylate synthase activity. Acts by binding to the stem-loop structure on pri-let-7, preventing LIN28-binding (LIN28A and/or LIN28B), thereby enhancing the interaction between pri-let-7 and the microprocessor DGCR8, which mediates miRNA maturation. This chain is Pseudouridylate synthase TRUB1, found in Homo sapiens (Human).